A 760-amino-acid polypeptide reads, in one-letter code: Sphingosine kinase B (760 aa).

Residues 1-108 (MENNNNEPAE…NNNNNEPVTS (108 aa)) form a disordered region. Over residues 12-39 (VQEKGPKLKNDIDLNDQFKDEKEKKEEI) the composition is skewed to basic and acidic residues. A compositionally biased stretch (low complexity) spans 40–106 (SSSSIENKNN…NNNNNNNEPV (67 aa)). Residues 247–383 (PKNRKIRILI…LDVCIVQQPT (137 aa)) enclose the DAGKc domain. ATP contacts are provided by residues 257–259 (NPK) and threonine 288. Residue 313-316 (SGDG) participates in substrate binding. Catalysis depends on aspartate 315, which acts as the Proton donor/acceptor. ATP is bound by residues glutamate 320 and 345–347 (GTG). Positions 394 to 438 (TVTTTTTTTSPTSASPTITSANNNNNNNNNNNNNNNNNNNNNNNN) are disordered. Substrate is bound at residue aspartate 461. The ATP site is built by arginine 468 and arginine 474. Positions 535 to 605 (DNDNNNKNKN…SSPRSDINMS (71 aa)) are disordered. Over residues 549-597 (EINSTTSNNNNNNNTTTTSTSSSTSTSTSTSSLTATTTTAKSTNSLSSS) the composition is skewed to low complexity. 734 to 736 (DGE) serves as a coordination point for ATP.

The catalysed reaction is a sphingoid base + ATP = a sphingoid 1-phosphate + ADP + H(+). Its activity is regulated as follows. Inhibited by N,N,-dimethylsphingosine. In terms of biological role, catalyzes the phosphorylation of sphingosine to form sphingosine-1-phosphate (S1P), which probably acts intracellularly as a second messenger perhaps by promoting cell proliferation. The chain is Sphingosine kinase B (sgkB) from Dictyostelium discoideum (Social amoeba).